We begin with the raw amino-acid sequence, 286 residues long: Bifunctional protein FolD (286 aa).

NADP(+) contacts are provided by residues 164–166, S193, and I234; that span reads GRS.

The protein belongs to the tetrahydrofolate dehydrogenase/cyclohydrolase family. Homodimer.

The enzyme catalyses (6R)-5,10-methylene-5,6,7,8-tetrahydrofolate + NADP(+) = (6R)-5,10-methenyltetrahydrofolate + NADPH. It catalyses the reaction (6R)-5,10-methenyltetrahydrofolate + H2O = (6R)-10-formyltetrahydrofolate + H(+). It functions in the pathway one-carbon metabolism; tetrahydrofolate interconversion. Catalyzes the oxidation of 5,10-methylenetetrahydrofolate to 5,10-methenyltetrahydrofolate and then the hydrolysis of 5,10-methenyltetrahydrofolate to 10-formyltetrahydrofolate. In Oleidesulfovibrio alaskensis (strain ATCC BAA-1058 / DSM 17464 / G20) (Desulfovibrio alaskensis), this protein is Bifunctional protein FolD.